We begin with the raw amino-acid sequence, 551 residues long: MADGVDHIDIYADVGEEFNQEAEYGGHDQIDLYDDVISPSANNGDAPEDRDYMDSLPPSVGDDVGKGAAPNVVYTYTGKRIALYIGNLTWWTTDEDLTEAVHSLGVNDILEIKFFENRANGQSKGFALVGVGSEASSKKLMDLLPKRELHGQNPVVTPCNKQFLSQFEMQSRKTTQSGQMSGEGKAGPPGGSSRAAFPPSNRGRGRFPGAIPGGDRFPGPAGPGGPPHRSQLDKLPTRPPLGPPGPPGPPGPPPPGQVLPPPLAGPPNRGDRPPPPVLFPGQPFGQPPLGPLPPGPPPPVPGYGPPPGPPPPQQGPPPPPGPFPPRPPGPLGPPLTLAPPPHLPGPPPGAPPPAPHVNPAFFPPPANSGIPTSDSRGPPPTDPYGRPPPYDRGDYGPPGREMDAARTPLSEAEFEEIMNRNRAISSSAISRAVSDASAGDYGSAIETLVTAISLIKQSKVSADDRCKVLISSLQDCLHGIESKSYGSGSRRERSRERDHSRSREKSRRHKSRSRDRHDDYYRERSRERERHRDRDRDRDRERDREREYRHR.

An RRM domain is found at 81 to 161 (IALYIGNLTW…QNPVVTPCNK (81 aa)). A Phosphothreonine modification is found at Thr157. Over residues 169–180 (MQSRKTTQSGQM) the composition is skewed to polar residues. Disordered stretches follow at residues 169 to 410 (MQSR…TPLS) and 477 to 551 (LHGI…YRHR). Pro residues-rich tracts occupy residues 237-265 (TRPP…PLAG), 285-366 (GQPP…PPPA), and 377-388 (GPPPTDPYGRPP). Basic and acidic residues-rich tracts occupy residues 389–404 (PYDR…EMDA) and 489–503 (SRRE…SRSR). Ser494, Ser500, Ser511, Ser513, and Ser525 each carry phosphoserine. A compositionally biased stretch (basic residues) spans 504 to 514 (EKSRRHKSRSR). The span at 515–551 (DRHDDYYRERSRERERHRDRDRDRDRERDREREYRHR) shows a compositional bias: basic and acidic residues.

It belongs to the RRM CPSF6/7 family. As to quaternary structure, component of the cleavage factor Im (CFIm) complex.

It localises to the nucleus. The protein localises to the nucleoplasm. Its subcellular location is the nucleus speckle. The protein resides in the cytoplasm. Functionally, component of the cleavage factor Im (CFIm) complex that functions as an activator of the pre-mRNA 3'-end cleavage and polyadenylation processing required for the maturation of pre-mRNA into functional mRNAs. CFIm contributes to the recruitment of multiprotein complexes on specific sequences on the pre-mRNA 3'-end, so called cleavage and polyadenylation signals (pA signals). Most pre-mRNAs contain multiple pA signals, resulting in alternative cleavage and polyadenylation (APA) producing mRNAs with variable 3'-end formation. The CFIm complex acts as a key regulator of cleavage and polyadenylation site choice during APA through its binding to 5'-UGUA-3' elements localized in the 3'-untranslated region (UTR) for a huge number of pre-mRNAs. Plays a role in mRNA export. The protein is Cleavage and polyadenylation specificity factor subunit 6 of Gallus gallus (Chicken).